The sequence spans 88 residues: M-zodatoxin-Lt1a (88 aa).

Residues 1 to 22 form the signal peptide; it reads MKYFVVALALAVALVCIAESTA. A propeptide spanning residues 23–62 is cleaved from the precursor; that stretch reads YDVNEELENELDDLSDAAWLAKAAEDLQALDDFEESEESR. Positions 59-62 match the Processing quadruplet motif motif; sequence EESR.

In terms of processing, cleavage of the propeptide depends on the processing quadruplet motif (XXXR, with at least one of X being E). As to expression, expressed by the venom gland.

The protein localises to the secreted. Has antimicrobial activity against Gram-positive bacteria (A.globiformis VKM Ac-1112 (MIC=0.5 uM), and B.subtilis VKM B-501 (MIC=1.0 uM)), Gram-negative bacteria (E.coli DH5-alpha (MIC=1.0 uM), E.coli MH1 (MIC=0.7 uM), and P.aeruginosa PAO1 (MIC=4.1 uM)), and yeasts (P.pastoris GS115 (MIC=17 uM), and S.cerevisiae Y190 (MIC&gt;33 uM)). Has a moderate hemolytic activity against rabbit erythrocytes. Causes paralysis, but is not lethal when injected into insect (M.domestica) larvae. The sequence is that of M-zodatoxin-Lt1a from Lachesana tarabaevi (Spider).